Reading from the N-terminus, the 257-residue chain is Adenosylcobinamide-GDP ribazoletransferase (257 aa).

4 consecutive transmembrane segments (helical) span residues 28 to 48 (FARS…LVAL), 50 to 70 (LFVP…VYAV), 110 to 130 (VALA…VEVA), and 199 to 219 (WPQV…AALV).

The protein belongs to the CobS family. Mg(2+) is required as a cofactor.

Its subcellular location is the cell membrane. The catalysed reaction is alpha-ribazole + adenosylcob(III)inamide-GDP = adenosylcob(III)alamin + GMP + H(+). It catalyses the reaction alpha-ribazole 5'-phosphate + adenosylcob(III)inamide-GDP = adenosylcob(III)alamin 5'-phosphate + GMP + H(+). It functions in the pathway cofactor biosynthesis; adenosylcobalamin biosynthesis; adenosylcobalamin from cob(II)yrinate a,c-diamide: step 7/7. Joins adenosylcobinamide-GDP and alpha-ribazole to generate adenosylcobalamin (Ado-cobalamin). Also synthesizes adenosylcobalamin 5'-phosphate from adenosylcobinamide-GDP and alpha-ribazole 5'-phosphate. This chain is Adenosylcobinamide-GDP ribazoletransferase, found in Halorubrum lacusprofundi (strain ATCC 49239 / DSM 5036 / JCM 8891 / ACAM 34).